The primary structure comprises 440 residues: MTNMSWSFLTRLLEEIHNHSTFVGKVWLTVLVVFRIVLTAVGGESIYSDEQSKFTCNTRQPGCDNVCYDAFAPLSHVRFWVFQIVVISTPSVMYLGYAVHRLARASEQERRRALRRRPGTRRLPRAQLPPPPPGWPDTTDLGEAEPILALEEDEDEEPGAPEGPGEDTEEERAEDVAAKGGGGDGKTVVTPGPAGQHDGRRRIQREGLMRVYVAQLVVRAAFEVAFLVGQYLLYGFEVPPFFACSRQPCPHVVDCFVSRPTEKTVFLLVMYVVSCLCLLLNLCEMAHLGLGSAQDAVRGRRGASAAGPGPTPRPPPCAFPAAAAGLACPPDYSLVVRAAERARAHDQNLANLALQALRDGAAVAAVSADRDSPPCAGLNATSRGAPRVGGLASGTGSATSGGTVGEQSRPGAQEQLATKPRAGSEKGSTGSRDGKATVWI.

At 1–21 the chain is on the cytoplasmic side; sequence MTNMSWSFLTRLLEEIHNHST. A helical membrane pass occupies residues 22 to 42; the sequence is FVGKVWLTVLVVFRIVLTAVG. Residues 43–78 are Extracellular-facing; it reads GESIYSDEQSKFTCNTRQPGCDNVCYDAFAPLSHVR. The chain crosses the membrane as a helical span at residues 79–99; that stretch reads FWVFQIVVISTPSVMYLGYAV. At 100 to 223 the chain is on the cytoplasmic side; it reads HRLARASEQE…AQLVVRAAFE (124 aa). A disordered region spans residues 108-199; that stretch reads QERRRALRRR…TPGPAGQHDG (92 aa). Over residues 112-124 the composition is skewed to basic residues; that stretch reads RALRRRPGTRRLP. Residues 136–149 show a composition bias toward low complexity; sequence PDTTDLGEAEPILA. Over residues 150-173 the composition is skewed to acidic residues; it reads LEEDEDEEPGAPEGPGEDTEEERA. Residues 224 to 244 traverse the membrane as a helical segment; it reads VAFLVGQYLLYGFEVPPFFAC. Residues 245 to 264 lie on the Extracellular side of the membrane; sequence SRQPCPHVVDCFVSRPTEKT. The chain crosses the membrane as a helical span at residues 265-285; the sequence is VFLLVMYVVSCLCLLLNLCEM. The Cytoplasmic portion of the chain corresponds to 286 to 440; sequence AHLGLGSAQD…SRDGKATVWI (155 aa). The disordered stretch occupies residues 369–440; that stretch reads DRDSPPCAGL…SRDGKATVWI (72 aa). The residue at position 372 (S372) is a Phosphoserine. Positions 388–401 are enriched in low complexity; it reads VGGLASGTGSATSG.

It belongs to the connexin family. Gamma-type subfamily. A connexon is composed of a hexamer of connexins. Interacts with TJP1. In terms of tissue distribution, mainly expressed by oligodendrocytes in the central nervous system (at protein level).

The protein localises to the cell membrane. It localises to the cell junction. Its subcellular location is the gap junction. One gap junction consists of a cluster of closely packed pairs of transmembrane channels, the connexons, through which materials of low MW diffuse from one cell to a neighboring cell. May play a role in myelination in central and peripheral nervous systems. This chain is Gap junction gamma-2 protein (Gjc2), found in Mus musculus (Mouse).